The sequence spans 272 residues: Phosphatidylglycerol--prolipoprotein diacylglyceryl transferase (272 aa).

A run of 4 helical transmembrane segments spans residues 15 to 35, 53 to 73, 94 to 114, and 117 to 137; these read LGPLYVHMYSVFMLAGALVLF, AFAVTSLLIPVILGARLWHVV, GLGFIGGVFSGLICFFVIAKI, and VPPFTFLDALAPGILVALCFA. An a 1,2-diacyl-sn-glycero-3-phospho-(1'-sn-glycerol)-binding site is contributed by arginine 138. The next 3 membrane-spanning stretches (helical) occupy residues 174–194, 199–219, and 237–257; these read FHPIFLYEIILNVFIIVILLV, VFVKTVFPKGSVFAAFLVLYG, and FGLDLNYVGAAAMIIVGVLIA.

It belongs to the Lgt family.

The protein localises to the cell membrane. It carries out the reaction L-cysteinyl-[prolipoprotein] + a 1,2-diacyl-sn-glycero-3-phospho-(1'-sn-glycerol) = an S-1,2-diacyl-sn-glyceryl-L-cysteinyl-[prolipoprotein] + sn-glycerol 1-phosphate + H(+). It functions in the pathway protein modification; lipoprotein biosynthesis (diacylglyceryl transfer). In terms of biological role, catalyzes the transfer of the diacylglyceryl group from phosphatidylglycerol to the sulfhydryl group of the N-terminal cysteine of a prolipoprotein, the first step in the formation of mature lipoproteins. This Tropheryma whipplei (strain TW08/27) (Whipple's bacillus) protein is Phosphatidylglycerol--prolipoprotein diacylglyceryl transferase.